Consider the following 272-residue polypeptide: Exosome complex component MTR3 (272 aa).

A disordered region spans residues 1-36 (MPGDHRRIRGPEESQPPQLYAADEEEAPGTRDPTRL).

The protein belongs to the RNase PH family. As to quaternary structure, component of the RNA exosome core complex (Exo-9), composed of EXOSC1, EXOSC2, EXOSC3, EXOSC4, EXOSC5, EXOSC6, EXOSC7, EXOSC8 and EXOSC9; within the complex interacts with EXOSC1, EXOSC7 and EXOSC8. The catalytically inactive Exo-9 may associate with the catalytic subunit EXOSC10/RRP6. Exo-9 may associate with DIS3 to form the nucleolar exosome complex, or DIS3L to form the cytoplasmic exosome complex. Exo-9 is formed by a hexameric base ring consisting of the heterodimers EXOSC4-EXOSC9, EXOSC5-EXOSC8 and EXOSC6-EXOSC7, and a cap ring consisting of EXOSC1, EXOSC2 and EXOSC3. The RNA exosome complex associates with cofactors EXOSC10/RRP6, C1D/RRP47, MPHOSPH6/MPP6 and MTREX/MTR4.

The protein resides in the cytoplasm. The protein localises to the nucleus. It is found in the nucleolus. Non-catalytic component of the RNA exosome complex which has 3'-&gt;5' exoribonuclease activity and participates in a multitude of cellular RNA processing and degradation events. In the nucleus, the RNA exosome complex is involved in proper maturation of stable RNA species such as rRNA, snRNA and snoRNA, in the elimination of RNA processing by-products and non-coding 'pervasive' transcripts, such as antisense RNA species and promoter-upstream transcripts (PROMPTs), and of mRNAs with processing defects, thereby limiting or excluding their export to the cytoplasm. The RNA exosome may be involved in Ig class switch recombination (CSR) and/or Ig variable region somatic hypermutation (SHM) by targeting AICDA deamination activity to transcribed dsDNA substrates. In the cytoplasm, the RNA exosome complex is involved in general mRNA turnover and specifically degrades inherently unstable mRNAs containing AU-rich elements (AREs) within their 3' untranslated regions, and in RNA surveillance pathways, preventing translation of aberrant mRNAs. It seems to be involved in degradation of histone mRNA. The catalytic inactive RNA exosome core complex of 9 subunits (Exo-9) is proposed to play a pivotal role in the binding and presentation of RNA for ribonucleolysis, and to serve as a scaffold for the association with catalytic subunits and accessory proteins or complexes. This Homo sapiens (Human) protein is Exosome complex component MTR3 (EXOSC6).